The following is a 118-amino-acid chain: Basic phospholipase A2 PA-13 (118 aa).

Disulfide bonds link cysteine 11–cysteine 71, cysteine 27–cysteine 117, cysteine 29–cysteine 45, cysteine 44–cysteine 98, cysteine 51–cysteine 91, cysteine 60–cysteine 84, and cysteine 78–cysteine 89. Ca(2+)-binding residues include tyrosine 28, glycine 30, and glycine 32. The active site involves histidine 48. Residue aspartate 49 coordinates Ca(2+). Aspartate 92 is a catalytic residue.

Belongs to the phospholipase A2 family. Group I subfamily. D49 sub-subfamily. Ca(2+) is required as a cofactor. In terms of tissue distribution, expressed by the venom gland.

The protein resides in the secreted. The catalysed reaction is a 1,2-diacyl-sn-glycero-3-phosphocholine + H2O = a 1-acyl-sn-glycero-3-phosphocholine + a fatty acid + H(+). Functionally, PLA2 catalyzes the calcium-dependent hydrolysis of the 2-acyl groups in 3-sn-phosphoglycerides. This chain is Basic phospholipase A2 PA-13, found in Pseudechis australis (Mulga snake).